A 401-amino-acid chain; its full sequence is Imidazolonepropionase (401 aa).

Fe(3+) contacts are provided by His-70 and His-72. Zn(2+)-binding residues include His-70 and His-72. 4-imidazolone-5-propanoate is bound by residues Arg-79, Tyr-142, and His-175. Tyr-142 is an N-formimidoyl-L-glutamate binding site. Residue His-240 participates in Fe(3+) binding. His-240 is a binding site for Zn(2+). Residue Gln-243 participates in 4-imidazolone-5-propanoate binding. Position 315 (Asp-315) interacts with Fe(3+). Asp-315 is a binding site for Zn(2+). The N-formimidoyl-L-glutamate site is built by Asn-317 and Gly-319. Residue Thr-320 coordinates 4-imidazolone-5-propanoate.

This sequence belongs to the metallo-dependent hydrolases superfamily. HutI family. Zn(2+) is required as a cofactor. Fe(3+) serves as cofactor.

The protein resides in the cytoplasm. It catalyses the reaction 4-imidazolone-5-propanoate + H2O = N-formimidoyl-L-glutamate. The protein operates within amino-acid degradation; L-histidine degradation into L-glutamate; N-formimidoyl-L-glutamate from L-histidine: step 3/3. Functionally, catalyzes the hydrolytic cleavage of the carbon-nitrogen bond in imidazolone-5-propanoate to yield N-formimidoyl-L-glutamate. It is the third step in the universal histidine degradation pathway. In Caulobacter sp. (strain K31), this protein is Imidazolonepropionase.